The primary structure comprises 145 residues: uncharacterized protein (145 aa).

Belongs to the asfivirus K145R family.

Its subcellular location is the virion. This is an uncharacterized protein from African swine fever virus (isolate Tick/South Africa/Pretoriuskop Pr4/1996) (ASFV).